The primary structure comprises 1012 residues: 5'-3' exoribonuclease 2 (1012 aa).

The segment at 264-281 adopts a CCHC-type zinc-finger fold; it reads GKCFLCGQEGHRAADCEG. Disordered stretches follow at residues 411–439, 888–976, and 990–1012; these read VQQR…AQAS, TFKD…QRQV, and QRKK…PKTA. The span at 415-433 shows a compositional bias: basic and acidic residues; sequence QSERFRRDKARDKARDNAR. Residues 904-914 show a composition bias toward polar residues; sequence ITPKKMNSPQR. Composition is skewed to basic and acidic residues over residues 918 to 928 and 950 to 962; these read WKKDETPQSRE and PQRE…KKEN. Residues 990–1002 show a composition bias toward basic residues; sequence QRKKEKYLRKKAK.

Belongs to the 5'-3' exonuclease family. XRN2/RAT1 subfamily. As to expression, expressed in roots, leaves, stems and flowers.

The protein resides in the nucleus. Its function is as follows. Possesses 5'-&gt;3' exoribonuclease activity. Acts as an endogenous post-transcriptional gene silencing (PTGS) suppressor. Degrades miRNA-derived loops, excised during miRNA maturation in the nucleus. Involved in pre-rRNA processing. Involved in the primary exonucleolytic shortening of the 5' external transcribed spacer (5'ETS), required for endonucleolytic processing at site P by the U3 snoRNP complex. Involved with XRN3 in the 5'-end processing of 5.8S and 25S rRNAs. Contributes with XRN3 to polyadenylation-dependent nuclear RNA surveillance. Involved in the degradation of aberrant polyadenylated pre-rRNA through 5'-end processing. This is 5'-3' exoribonuclease 2 from Arabidopsis thaliana (Mouse-ear cress).